A 494-amino-acid chain; its full sequence is UPF0371 protein Sez_1293 (494 aa).

Belongs to the UPF0371 family.

The polypeptide is UPF0371 protein Sez_1293 (Streptococcus equi subsp. zooepidemicus (strain MGCS10565)).